Here is a 437-residue protein sequence, read N- to C-terminus: Trigger factor (437 aa).

In terms of domain architecture, PPIase FKBP-type spans 161–246 (DDQVNIDFVG…VNSVSAPQLP (86 aa)).

It belongs to the FKBP-type PPIase family. Tig subfamily.

The protein localises to the cytoplasm. The catalysed reaction is [protein]-peptidylproline (omega=180) = [protein]-peptidylproline (omega=0). Involved in protein export. Acts as a chaperone by maintaining the newly synthesized protein in an open conformation. Functions as a peptidyl-prolyl cis-trans isomerase. The chain is Trigger factor from Pseudomonas putida (strain W619).